A 491-amino-acid polypeptide reads, in one-letter code: Acetylcholine receptor subunit epsilon (491 aa).

The signal sequence occupies residues 1–20 (MAGALLCALLLLQLLGRGEG). Residues 21–239 (KNEELRLYHY…VIYSLIIRRK (219 aa)) lie on the Extracellular side of the membrane. Asn86 and Asn161 each carry an N-linked (GlcNAc...) asparagine glycan. Cys148 and Cys162 form a disulfide bridge. Residues 240-264 (PLFYVINIIVPCVLISGLVLLAYFL) form a helical membrane-spanning segment. At 265–272 (PAQAGGQK) the chain is on the cytoplasmic side. The chain crosses the membrane as a helical span at residues 273–291 (CTVSINVLLAQTVFLFLIA). Residues 292–306 (QKTPETSLSVPLLGR) are Extracellular-facing. Residues 307–328 (YLIFVMVVATLIVMNCVIVLNV) traverse the membrane as a helical segment. Over 329 to 456 (SLRTPTTHAM…WVRMGKALDS (128 aa)) the chain is Cytoplasmic. The helical transmembrane segment at 457-480 (ICFWAALVLFLVGSSLIFLGAYFN) threads the bilayer. Residues 481–491 (RVPQLPYPPCM) lie on the Extracellular side of the membrane.

Belongs to the ligand-gated ion channel (TC 1.A.9) family. Acetylcholine receptor (TC 1.A.9.1) subfamily. Epsilon/CHRNE sub-subfamily.

It is found in the postsynaptic cell membrane. It localises to the cell membrane. It carries out the reaction K(+)(in) = K(+)(out). The catalysed reaction is Na(+)(in) = Na(+)(out). In terms of biological role, after binding acetylcholine, the AChR responds by an extensive change in conformation that affects all subunits and leads to opening of an ion-conducting channel across the plasma membrane. This is Acetylcholine receptor subunit epsilon (CHRNE) from Bos taurus (Bovine).